The sequence spans 332 residues: MTKNLLEQLREMTVVVADTGDIQAIEKFTPRDATTNPSLITAAAKMPEYQEIVDQTLLQAKKDAGAGASKGQIVSLAFDRLAVSFGLKILQIIPGRVSTEVDARLSYDTEATITKARELIAQYKAAGIGPERVLIKIASTWEGIKAAEILEKEGIHCNLTLLFGLHQAIACAEAGITLISPFVGRILDWYKKETGRDSYPSAEDPGVISVTTIYNYYKKFGYTTEVMGASFRNIGEITELAGSDLLTISPGLLGELQATIGELPRKLDPAKAATLDIEKISIDKATFDKMHAADRMAYDKLDEGIKGFTKALEELETLLAERLARLEVVASH.

The Schiff-base intermediate with substrate role is filled by Lys-136.

The protein belongs to the transaldolase family. Type 1 subfamily.

It localises to the cytoplasm. It carries out the reaction D-sedoheptulose 7-phosphate + D-glyceraldehyde 3-phosphate = D-erythrose 4-phosphate + beta-D-fructose 6-phosphate. It functions in the pathway carbohydrate degradation; pentose phosphate pathway; D-glyceraldehyde 3-phosphate and beta-D-fructose 6-phosphate from D-ribose 5-phosphate and D-xylulose 5-phosphate (non-oxidative stage): step 2/3. Functionally, transaldolase is important for the balance of metabolites in the pentose-phosphate pathway. The sequence is that of Transaldolase from Trichormus variabilis (strain ATCC 29413 / PCC 7937) (Anabaena variabilis).